The chain runs to 214 residues: Adenylate kinase (214 aa).

10–15 (GAGKGT) serves as a coordination point for ATP. Residues 30 to 59 (STGDMLRSAVKAGTELGLKAKALMDHGKLV) are NMP. Residues Thr31, Arg36, 57–59 (KLV), 85–88 (GFPR), and Gln92 each bind AMP. Residues 122-159 (GRRIHAPSGRVYHIKFNPPVVENKDDVTGEELTVRKDD) are LID. Residues Arg123 and 132-133 (VY) contribute to the ATP site. Arg156 and Arg167 together coordinate AMP. Residue Arg200 coordinates ATP.

Belongs to the adenylate kinase family. In terms of assembly, monomer.

It is found in the cytoplasm. It catalyses the reaction AMP + ATP = 2 ADP. The protein operates within purine metabolism; AMP biosynthesis via salvage pathway; AMP from ADP: step 1/1. Catalyzes the reversible transfer of the terminal phosphate group between ATP and AMP. Plays an important role in cellular energy homeostasis and in adenine nucleotide metabolism. This chain is Adenylate kinase, found in Photorhabdus laumondii subsp. laumondii (strain DSM 15139 / CIP 105565 / TT01) (Photorhabdus luminescens subsp. laumondii).